The sequence spans 435 residues: Elongation factor 1-alpha (435 aa).

In terms of domain architecture, tr-type G spans 4 to 229; sequence KPHLNLIVIG…DQLEIPPKPV (226 aa). The segment at 13-20 is G1; sequence GHVDHGKS. 13–20 lines the GTP pocket; sequence GHVDHGKS. Position 20 (Ser20) interacts with Mg(2+). The segment at 69 to 73 is G2; that stretch reads GVTIN. The interval 90–93 is G3; the sequence is DAPG. GTP contacts are provided by residues 90 to 94 and 152 to 155; these read DAPGH and NKMD. Residues 152 to 155 form a G4 region; the sequence is NKMD. The interval 193 to 195 is G5; the sequence is VAP.

This sequence belongs to the TRAFAC class translation factor GTPase superfamily. Classic translation factor GTPase family. EF-Tu/EF-1A subfamily.

The protein localises to the cytoplasm. It catalyses the reaction GTP + H2O = GDP + phosphate + H(+). Functionally, GTP hydrolase that promotes the GTP-dependent binding of aminoacyl-tRNA to the A-site of ribosomes during protein biosynthesis. The sequence is that of Elongation factor 1-alpha from Sulfurisphaera tokodaii (strain DSM 16993 / JCM 10545 / NBRC 100140 / 7) (Sulfolobus tokodaii).